The chain runs to 26 residues: Dermaseptin-J1 (26 aa).

V26 bears the Valine amide mark.

As to expression, expressed by the skin glands.

It is found in the secreted. Has antimicrobial activity. The chain is Dermaseptin-J1 from Phasmahyla jandaia (Jandaia leaf frog).